Here is a 154-residue protein sequence, read N- to C-terminus: Large ribosomal subunit protein uL13 (154 aa).

It belongs to the universal ribosomal protein uL13 family. In terms of assembly, part of the 50S ribosomal subunit.

Functionally, this protein is one of the early assembly proteins of the 50S ribosomal subunit, although it is not seen to bind rRNA by itself. It is important during the early stages of 50S assembly. This Rhodopseudomonas palustris (strain BisB18) protein is Large ribosomal subunit protein uL13.